The following is a 276-amino-acid chain: Adenylyl-sulfate kinase 1, chloroplastic (276 aa).

A chloroplast-targeting transit peptide spans 1–38 (MIAAGAKSLLGLSMASPKGIFDSNSMSNSRSVVVVRAC). Positions 46-74 (TLSHNKNGSIPEVKSINGHTGQKQGPLST) are disordered. Residues 62–74 (NGHTGQKQGPLST) are compositionally biased toward polar residues. 108-116 (GLSGSGKST) contributes to the ATP binding site. Residues Asp138, Arg141, Arg155, Asn158, 181–182 (IS), and Gly231 each bind substrate. The Phosphoserine intermediate role is filled by Ser182.

Belongs to the APS kinase family. As to quaternary structure, homodimer; disulfide-linked. Interacts with APK2. In terms of tissue distribution, expressed in root vasculature, root tips, leaf epidermal and guard cells, pollen grains and funiculus of developing seeds.

Its subcellular location is the plastid. It localises to the chloroplast. The enzyme catalyses adenosine 5'-phosphosulfate + ATP = 3'-phosphoadenylyl sulfate + ADP + H(+). It participates in sulfur metabolism; hydrogen sulfide biosynthesis; sulfite from sulfate: step 2/3. In terms of biological role, catalyzes the synthesis of activated sulfate. Essential for plant reproduction and viability. Required for the production of glucosinolates. In Arabidopsis thaliana (Mouse-ear cress), this protein is Adenylyl-sulfate kinase 1, chloroplastic (APK1).